The following is a 343-amino-acid chain: Methylthioribose-1-phosphate isomerase (343 aa).

Substrate-binding positions include 48–50 (RGA), R88, and Q193. D234 acts as the Proton donor in catalysis. 244-245 (NK) provides a ligand contact to substrate.

The protein belongs to the eIF-2B alpha/beta/delta subunits family. MtnA subfamily.

The enzyme catalyses 5-(methylsulfanyl)-alpha-D-ribose 1-phosphate = 5-(methylsulfanyl)-D-ribulose 1-phosphate. Its pathway is amino-acid biosynthesis; L-methionine biosynthesis via salvage pathway; L-methionine from S-methyl-5-thio-alpha-D-ribose 1-phosphate: step 1/6. Its function is as follows. Catalyzes the interconversion of methylthioribose-1-phosphate (MTR-1-P) into methylthioribulose-1-phosphate (MTRu-1-P). The sequence is that of Methylthioribose-1-phosphate isomerase from Thermotoga petrophila (strain ATCC BAA-488 / DSM 13995 / JCM 10881 / RKU-1).